Reading from the N-terminus, the 235-residue chain is Thiamine import ATP-binding protein ThiQ (235 aa).

Positions Leu-2 to Ile-230 constitute an ABC transporter domain. Gly-32–Ser-39 lines the ATP pocket.

This sequence belongs to the ABC transporter superfamily. Thiamine importer (TC 3.A.1.19.1) family. In terms of assembly, the complex is composed of two ATP-binding proteins (ThiQ), two transmembrane proteins (ThiP) and a solute-binding protein (ThiB).

Its subcellular location is the cell inner membrane. It catalyses the reaction thiamine(out) + ATP + H2O = thiamine(in) + ADP + phosphate + H(+). Part of the ABC transporter complex ThiBPQ involved in thiamine import. Responsible for energy coupling to the transport system. Is also involved in thiamine pyrophosphate (TPP) transport. In Salmonella typhimurium (strain LT2 / SGSC1412 / ATCC 700720), this protein is Thiamine import ATP-binding protein ThiQ.